The chain runs to 309 residues: ATP synthase gamma chain (309 aa).

Belongs to the ATPase gamma chain family. As to quaternary structure, F-type ATPases have 2 components, CF(1) - the catalytic core - and CF(0) - the membrane proton channel. CF(1) has five subunits: alpha(3), beta(3), gamma(1), delta(1), epsilon(1). CF(0) has three main subunits: a, b and c.

Its subcellular location is the cell membrane. In terms of biological role, produces ATP from ADP in the presence of a proton gradient across the membrane. The gamma chain is believed to be important in regulating ATPase activity and the flow of protons through the CF(0) complex. The protein is ATP synthase gamma chain of Salinispora tropica (strain ATCC BAA-916 / DSM 44818 / JCM 13857 / NBRC 105044 / CNB-440).